The sequence spans 103 residues: Large ribosomal subunit protein uL23 (103 aa).

It belongs to the universal ribosomal protein uL23 family. In terms of assembly, part of the 50S ribosomal subunit. Contacts protein L29, and trigger factor when it is bound to the ribosome.

Its function is as follows. One of the early assembly proteins it binds 23S rRNA. One of the proteins that surrounds the polypeptide exit tunnel on the outside of the ribosome. Forms the main docking site for trigger factor binding to the ribosome. This Chlorobaculum tepidum (strain ATCC 49652 / DSM 12025 / NBRC 103806 / TLS) (Chlorobium tepidum) protein is Large ribosomal subunit protein uL23.